Reading from the N-terminus, the 30-residue chain is Photosystem I reaction center subunit XII (30 aa).

A helical membrane pass occupies residues 7–26 (IMVALFAALFTGILALRLGT).

The protein belongs to the PsaM family.

Its subcellular location is the plastid. The protein localises to the chloroplast thylakoid membrane. In Mesostigma viride (Green alga), this protein is Photosystem I reaction center subunit XII.